The primary structure comprises 354 residues: Guanine nucleotide-binding protein G(i) subunit alpha-1 (354 aa).

Glycine 2 is lipidated: N-myristoyl glycine. Cysteine 3 is lipidated: S-palmitoyl cysteine. The G-alpha domain occupies 32–354 (REVKLLLLGA…KNNLKDCGLF (323 aa)). Residues 35-48 (KLLLLGAGESGKST) are G1 motif. GTP contacts are provided by residues 43–48 (ESGKST), 150–151 (DS), and 175–178 (LRTR). Residue serine 47 coordinates Mg(2+). The interval 173-181 (DVLRTRVKT) is G2 motif. Threonine 181 contacts Mg(2+). The tract at residues 196 to 205 (FKMFDVGGQR) is G3 motif. Residues 200 to 204 (DVGGQ), 269 to 272 (NKKD), and alanine 326 contribute to the GTP site. A G4 motif region spans residues 265-272 (ILFLNKKD). The tract at residues 324–329 (TCATDT) is G5 motif.

This sequence belongs to the G-alpha family. G(i/o/t/z) subfamily. Heterotrimeric G proteins are composed of 3 units; alpha, beta and gamma. The alpha chain contains the guanine nucleotide binding site. Part of a spindle orientation complex at least composed of GNAI1, GPSM2 and NUMA1. Identified in complex with the beta subunit GNB1 and the gamma subunit GNG1. Identified in complex with the beta subunit GNB1 and the gamma subunit GNG2. Component of the TAS2R14-GNAI1 complex, consisting of TAS2R14, GNAI1, GNB1 and GNG2; within the complex interacts with TAS2R14; this complex plays a role in the perception of bitterness. GTP binding causes dissociation of the heterotrimer, liberating the individual subunits so that they can interact with downstream effector proteins. Interacts (GDP-bound form) with GPSM1; this inhibits guanine nucleotide exchange and GTP binding. Interacts (GDP-bound form) with GPSM2 (via GoLoco domains); this inhibits guanine nucleotide exchange. Interacts with RGS10; this strongly enhances GTP hydrolysis. Interacts with RGS1 and RGS16; this strongly enhances GTPase activity. Interacts with RGS4. Interacts with RGS12. Interacts (via active GTP- or inactive GDP-bound forms) with RGS14 (via RGS and GoLoco domains). Interacts with RGS3, RGS6, RGS7, RGS8, RGS17, RGS18 and RGS20 (in vitro). Interacts (GDP-bound form) with RIC8A (via C-terminus); promoting GNAI1 folding and association with the plasma membrane. Interacts (inactive GDP-bound form) with NUCB1 (via GBA motif); the interaction leads to activation of GNAI1. Interacts (inactive GDP-bound form) with CCDC88C/DAPLE (via GBA motif); the interaction leads to activation of GNAI1. Interacts (inactive GDP-bound form) with CCDC8A/GIV (via GBA motif). Interacts with GPR15. Post-translationally, myristoylation at Gly-2 is required for membrane anchoring before palmitoylation. Palmitoylation at Cys-3 varies with membrane lipid composition.

The protein resides in the nucleus. It localises to the cytoplasm. Its subcellular location is the cell membrane. The protein localises to the cytoskeleton. It is found in the microtubule organizing center. The protein resides in the centrosome. It localises to the cell cortex. Its subcellular location is the membrane. Guanine nucleotide-binding proteins (G proteins) function as transducers downstream of G protein-coupled receptors (GPCRs) in numerous signaling cascades. The alpha chain contains the guanine nucleotide binding site and alternates between an active, GTP-bound state and an inactive, GDP-bound state. Signaling by an activated GPCR promotes GDP release and GTP binding. The alpha subunit has a low GTPase activity that converts bound GTP to GDP, thereby terminating the signal. Both GDP release and GTP hydrolysis are modulated by numerous regulatory proteins. Signaling is mediated via effector proteins, such as adenylate cyclase. Inhibits adenylate cyclase activity of ADCY1, ADCY5 and ADCY6, leading to decreased intracellular cAMP levels. The inactive GDP-bound form prevents the association of RGS14 with centrosomes and is required for the translocation of RGS14 from the cytoplasm to the plasma membrane. Required for normal cytokinesis during mitosis. Required for cortical dynein-dynactin complex recruitment during metaphase. This chain is Guanine nucleotide-binding protein G(i) subunit alpha-1 (GNAI1), found in Pongo abelii (Sumatran orangutan).